A 226-amino-acid chain; its full sequence is Histone H2B.v1 (226 aa).

The interval 100-130 (FNSAKQYPPQPPPAKTATPSSPSSIPAPPIS) is disordered. Low complexity predominate over residues 114–123 (KTATPSSPSS).

This sequence belongs to the histone H2B family.

In Dictyostelium discoideum (Social amoeba), this protein is Histone H2B.v1 (H2Bv1).